The sequence spans 177 residues: Ubiquinol-cytochrome c reductase iron-sulfur subunit (177 aa).

Residues 18–38 (IVLTASSVAAVGAACAFWPII) form a helical membrane-spanning segment. One can recognise a Rieske domain in the interval 88 to 175 (ARAVKMSELI…YIFISDTKIR (88 aa)). [2Fe-2S] cluster-binding residues include Cys-120, His-122, Cys-139, and His-142. Cys-125 and Cys-141 are joined by a disulfide.

It belongs to the Rieske iron-sulfur protein family. In terms of assembly, the main subunits of complex b-c1 are: cytochrome b, cytochrome c1 and the Rieske protein. [2Fe-2S] cluster serves as cofactor.

It is found in the cell membrane. It carries out the reaction a quinol + 2 Fe(III)-[cytochrome c](out) = a quinone + 2 Fe(II)-[cytochrome c](out) + 2 H(+)(out). Component of the ubiquinol-cytochrome c reductase complex (complex III or cytochrome b-c1 complex), which is a respiratory chain that generates an electrochemical potential coupled to ATP synthesis. The sequence is that of Ubiquinol-cytochrome c reductase iron-sulfur subunit (petA) from Rickettsia typhi (strain ATCC VR-144 / Wilmington).